A 107-amino-acid polypeptide reads, in one-letter code: Probable insulin-like peptide beta-type 3 (107 aa).

A signal peptide spans 1-19; it reads MKLSVVLALFIIFQLGAAS. Positions 20-55 are excised as a propeptide; it reads LMRNWMFDFEKELEHDYDDSEIGFHNIHSLMARSRR. 4 disulfide bridges follow: cysteine 62–cysteine 90, cysteine 74–cysteine 103, cysteine 78–cysteine 104, and cysteine 89–cysteine 94.

The protein belongs to the insulin family.

Its subcellular location is the secreted. The sequence is that of Probable insulin-like peptide beta-type 3 (ins-3) from Caenorhabditis elegans.